Consider the following 114-residue polypeptide: UPF0473 protein OEOE_1164 (114 aa).

Belongs to the UPF0473 family.

This is UPF0473 protein OEOE_1164 from Oenococcus oeni (strain ATCC BAA-331 / PSU-1).